The following is a 242-amino-acid chain: Protein Thf1 (242 aa).

Positions 178–209 (SSDKLQKDLDLYRSNLDKMQQLLTVIEDTLEA) form a coiled coil. The disordered stretch occupies residues 212–242 (KKRASQKLEKKPEVVEEKEHKENEEQQQSSN). Positions 217-235 (QKLEKKPEVVEEKEHKENE) are enriched in basic and acidic residues.

The protein belongs to the THF1 family.

May be involved in photosynthetic membrane biogenesis. The sequence is that of Protein Thf1 from Crocosphaera subtropica (strain ATCC 51142 / BH68) (Cyanothece sp. (strain ATCC 51142)).